The following is a 381-amino-acid chain: Cytochrome b (381 aa).

The next 4 membrane-spanning stretches (helical) occupy residues 36–56, 80–101, 116–136, and 181–201; these read FGSL…FLTM, WLIR…YIHI, WMVG…GYVL, and FYTF…IHLL. Heme b contacts are provided by His-86 and His-100. Positions 185 and 199 each coordinate heme b. His-204 is a binding site for a ubiquinone. Helical transmembrane passes span 229-249, 291-311, 323-343, and 350-370; these read FKDM…TLTN, LGGV…PLTF, MNQI…WIGA, and YVFV…INPM.

This sequence belongs to the cytochrome b family. The main subunits of complex b-c1 are: cytochrome b, cytochrome c1 and the Rieske protein. Requires heme b as cofactor.

Its subcellular location is the mitochondrion inner membrane. Its function is as follows. Component of the ubiquinol-cytochrome c reductase complex (complex III or cytochrome b-c1 complex) that is part of the mitochondrial respiratory chain. The b-c1 complex mediates electron transfer from ubiquinol to cytochrome c. Contributes to the generation of a proton gradient across the mitochondrial membrane that is then used for ATP synthesis. The sequence is that of Cytochrome b (MT-CYB) from Ostrinia nubilalis (European corn borer).